The primary structure comprises 729 residues: Polyribonucleotide nucleotidyltransferase (729 aa).

The tract at residues 399-419 (YMHNYNFPPYSTGETGRVGSP) is disordered. Mg(2+)-binding residues include D509 and D515. The 60-residue stretch at 575 to 634 (PRVISVKIPVDKIGEVIGPKGKMINQIQADSGAEITVEDDGTIYIGAADGPAAETARSAI) folds into the KH domain. Positions 646 to 718 (GERYLGTIVK…ARGKISLAPG (73 aa)) constitute an S1 motif domain.

The protein belongs to the polyribonucleotide nucleotidyltransferase family. Requires Mg(2+) as cofactor.

The protein resides in the cytoplasm. The catalysed reaction is RNA(n+1) + phosphate = RNA(n) + a ribonucleoside 5'-diphosphate. In terms of biological role, involved in mRNA degradation. Catalyzes the phosphorolysis of single-stranded polyribonucleotides processively in the 3'- to 5'-direction. This chain is Polyribonucleotide nucleotidyltransferase, found in Parafrankia sp. (strain EAN1pec).